Consider the following 643-residue polypeptide: Threonine--tRNA ligase (643 aa).

In terms of domain architecture, TGS spans 1-61 (MPIITLPDGS…TEDSKLEIIT (61 aa)). Positions 243 to 534 (DHRKIGKALD…ITEEYAGFFP (292 aa)) are catalytic. Residues Cys334, His385, and His511 each coordinate Zn(2+).

Belongs to the class-II aminoacyl-tRNA synthetase family. In terms of assembly, homodimer. Zn(2+) is required as a cofactor.

It localises to the cytoplasm. It carries out the reaction tRNA(Thr) + L-threonine + ATP = L-threonyl-tRNA(Thr) + AMP + diphosphate + H(+). Functionally, catalyzes the attachment of threonine to tRNA(Thr) in a two-step reaction: L-threonine is first activated by ATP to form Thr-AMP and then transferred to the acceptor end of tRNA(Thr). Also edits incorrectly charged L-seryl-tRNA(Thr). The protein is Threonine--tRNA ligase of Pasteurella multocida (strain Pm70).